The following is a 1083-amino-acid chain: Solute carrier family 12 member 7 (1083 aa).

A disordered region spans residues 1–55 (MPTNFTVVPVEARADGAGDEAAERTEEPESPESVDQTSPTPGDGNPRENSPFINN). Topologically, residues 1–119 (MPTNFTVVPV…RREVKAPRMG (119 aa)) are cytoplasmic. The segment covering 12–27 (ARADGAGDEAAERTEE) has biased composition (basic and acidic residues). Phosphoserine occurs at positions 30 and 33. A Phosphothreonine modification is found at T37. 2 positions are modified to phosphoserine: S50 and S62. The chain crosses the membrane as a discontinuously helical span at residues 120–142 (TFIGVYLPCLQNILGVILFLRLT). 2 residues coordinate K(+): N131 and I132. V135 is a chloride binding site. The Extracellular portion of the chain corresponds to 143 to 149 (WIVGAAG). A helical membrane pass occupies residues 150–172 (VMESFLIVAMCCTCTMLTAISMS). Residues 173–196 (AIATNGVVPAGGSYYMISRSLGPE) are Cytoplasmic-facing. Residues 197–225 (FGGAVGLCFYLGTTFAGAMYILGTIEIFL) traverse the membrane as a helical segment. The Extracellular segment spans residues 226 to 249 (TYISPSAAIFQAETADGEAAALLN). 2 consecutive transmembrane segments (helical) span residues 250–271 (NMRV…VGVK) and 272–300 (YVNK…KTAF). Residues 301–419 (APPDIPVCLL…PYVLTDIMTY (119 aa)) lie on the Extracellular side of the membrane. N312 carries N-linked (GlcNAc...) (high mannose) asparagine glycosylation. N331 and N344 each carry an N-linked (GlcNAc...) (complex) asparagine glycan. An N-linked (GlcNAc...) (high mannose) asparagine glycan is attached at N360. The chain crosses the membrane as a helical span at residues 420-440 (FTMLVGIYFPSVTGIMAGSNR). The K(+) site is built by P429 and T432. P429 lines the chloride pocket. Positions 433 and 434 each coordinate chloride. The Cytoplasmic portion of the chain corresponds to 441–450 (SGDLKDAQKS). Residues 451 to 473 (IPTGTILAIVTTSFIYLSCIVLF) traverse the membrane as a helical segment. At 474-504 (GACIEGVVLRDKFGEALQGNLVIGMLAWPSP) the chain is on the extracellular side. Residues 505–531 (WVIVIGSFFSTCGAGLQSLTGAPRLLQ) traverse the membrane as a helical segment. Residues 532–554 (AIARDGIIPFLQVFGHGKANGEP) lie on the Cytoplasmic side of the membrane. The next 2 helical transmembrane spans lie at 555–573 (TWAL…LIAS) and 574–598 (LDSV…ACAV). Y589 is a chloride binding site. Over 599–612 (QTLLRTPNWRPRFK) the chain is Cytoplasmic. 2 helical membrane-spanning segments follow: residues 613–635 (FYHW…ICSW) and 636–651 (YYAL…IYKY). The Cytoplasmic segment spans residues 652-1083 (IEYRGAEKEW…GGREVITIYS (432 aa)). The interval 664–680 (GIRGLSLNAARYALLRV) is scissor helix. T973 and T980 each carry phosphothreonine.

The protein belongs to the SLC12A transporter family. K/Cl co-transporter subfamily. As to quaternary structure, homodimer; adopts a domain-swap conformation at the scissor helices connecting the transmembrane domain and C-terminal domain. Heterodimer with K-Cl cotransporter SLC12A5. Glycosylation at Asn-331 and Asn-344 is required for proper trafficking to the cell surface, and augments protein stability. As to expression, detected in proximal tubules in the kidney, in particular in basolateral membranes of intercalated cells in the cortical collecting duct.

Its subcellular location is the cell membrane. The enzyme catalyses K(+)(in) + chloride(in) = K(+)(out) + chloride(out). Its activity is regulated as follows. Activated by N-ethylmaleimide (NEM). Inhibited by furosemide, DIDS and bumetanide. The inhibition is much stronger in the presence of 50 mM K(+) in the uptake medium. Inhibited by DIOA. Inhibited by WNK3. Functionally, mediates electroneutral potassium-chloride cotransport when activated by cell swelling. May mediate K(+) uptake into Deiters' cells in the cochlea and contribute to K(+) recycling in the inner ear. Important for the survival of cochlear outer and inner hair cells and the maintenance of the organ of Corti. May be required for basolateral Cl(-) extrusion in the kidney and contribute to renal acidification. The protein is Solute carrier family 12 member 7 (Slc12a7) of Mus musculus (Mouse).